The primary structure comprises 717 residues: F-box only protein 42 (717 aa).

A compositionally biased stretch (acidic residues) spans 1–30 (MASSSDSEDDSFMAVDQEETVLEGTMDQDE). The segment at 1-34 (MASSSDSEDDSFMAVDQEETVLEGTMDQDEEPHP) is disordered. The region spanning 44-93 (NRSMSELPEEVLEYILSFLSPYQEHKTAALVCKQWYRLIKGVAHQCYHGF) is the F-box domain. Kelch repeat units follow at residues 132–184 (SMYV…VYKD), 186–242 (LVLF…VIDD), 244–293 (MIVF…VIDD), and 295–342 (TILI…LWCH). The disordered stretch occupies residues 361 to 474 (RAPLSPSLNS…PSTPSAPEGY (114 aa)). Residues 363–376 (PLSPSLNSRPSPIS) are compositionally biased toward low complexity. S365 and S373 each carry phosphoserine. Residue T378 is modified to Phosphothreonine. 2 stretches are compositionally biased toward polar residues: residues 416 to 426 (QRQTPSGSREG) and 455 to 469 (SLDS…STPS). S552 is subject to Phosphoserine. The segment covering 570 to 596 (GPSASAALSPPLGSSPGSPGSQSLSSG) has biased composition (low complexity). The disordered stretch occupies residues 570–631 (GPSASAALSP…GHHPPQSLNV (62 aa)).

In terms of assembly, component of some SCF complex, composed of CUL1, SKP1, RBX1 and FBXO42. Interacts (via the kelch domain) with p53/TP53; interaction is direct.

Substrate-recognition component of some SCF (SKP1-CUL1-F-box protein)-type E3 ubiquitin ligase complex. Specifically recognizes p53/TP53, promoting its ubiquitination and degradation. The protein is F-box only protein 42 (FBXO42) of Homo sapiens (Human).